A 970-amino-acid chain; its full sequence is m7GpppN-mRNA hydrolase (970 aa).

A Nudix hydrolase domain is found at 101 to 228 (KSIPVRGAAI…IKYYLINSMM (128 aa)). Phosphoserine is present on S116. The Nudix box signature appears at 134 to 155 (GKISKDENDIDCCIREVKEEIG). E149 and E153 together coordinate Mn(2+). Basic and acidic residues predominate over residues 302–314 (QHLKEQSGEHNQQ). Disordered regions lie at residues 302–341 (QHLKEQSGEHNQQKDQQSSFSSQQQPSIFPSLSEPFANNK), 417–465 (AVSQ…PKLK), 501–520 (SSQKIHASKPDTSFLPNDSV), and 528–692 (YEDF…LSST). The segment covering 315–334 (KDQQSSFSSQQQPSIFPSLS) has biased composition (low complexity). The residue at position 439 (S439) is a Phosphoserine. Acidic residues predominate over residues 528 to 539 (YEDFESSSDEEV). A compositionally biased stretch (basic and acidic residues) spans 560–576 (SEKDSRRSQKEKPRNDA). A compositionally biased stretch (polar residues) spans 577–590 (SKTNLNASAESNSV). Positions 596-608 (KSSPSTQSKQNSS) are enriched in low complexity. Acidic residues predominate over residues 625-637 (DAYEVFESSSDEE). Position 677 is a phosphothreonine (T677). Residues 677–691 (TESNKSINETVGLSS) are compositionally biased toward polar residues. Phosphoserine occurs at positions 679, 682, 751, 771, 773, and 778. The interval 831 to 867 (LKKNDSTGYPRTEGGPSSEMSTSMKRNDATNNQELDK) is disordered. Over residues 848–863 (SEMSTSMKRNDATNNQ) the composition is skewed to polar residues.

Belongs to the Nudix hydrolase family. DCP2 subfamily. As to quaternary structure, component of the decapping complex composed of DCP1 and DCP2. Interacts with mRNA, LSM2, LSM4 and LSM8. Interacts with EDC3. Mn(2+) serves as cofactor.

It localises to the cytoplasm. The protein localises to the P-body. It carries out the reaction a 5'-end (N(7)-methyl 5'-triphosphoguanosine)-ribonucleoside in mRNA + H2O = N(7)-methyl-GDP + a 5'-end phospho-ribonucleoside in mRNA + 2 H(+). Its function is as follows. Catalytic component of the decapping complex necessary for the degradation of mRNAs, both in normal mRNA turnover and in nonsense-mediated mRNA decay. Removes the 7-methyl guanine cap structure from mRNA molecules, yielding a 5'-phosphorylated mRNA fragment and 7m-GDP. Decapping is the major pathway of mRNA degradation in yeast and occurs through deadenylation, decapping and subsequent 5' to 3' exonucleolytic decay of the transcript body. Blocks autophagy in nutrient-rich conditions by repressing the expression of ATG-related genes through degradation of their transcripts. The polypeptide is m7GpppN-mRNA hydrolase (Saccharomyces cerevisiae (strain ATCC 204508 / S288c) (Baker's yeast)).